Here is a 219-residue protein sequence, read N- to C-terminus: Large ribosomal subunit protein uL4 (219 aa).

The disordered stretch occupies residues 43–101; that stretch reads AAARQGTHKTKRRGEVRGGGKKPYRQKGTGRARQGSTRAPQFAGGGVVHGPQPRDYSQR. Over residues 61 to 72 the composition is skewed to basic residues; that stretch reads GGKKPYRQKGTG.

This sequence belongs to the universal ribosomal protein uL4 family. In terms of assembly, part of the 50S ribosomal subunit.

Functionally, one of the primary rRNA binding proteins, this protein initially binds near the 5'-end of the 23S rRNA. It is important during the early stages of 50S assembly. It makes multiple contacts with different domains of the 23S rRNA in the assembled 50S subunit and ribosome. In terms of biological role, forms part of the polypeptide exit tunnel. In Streptomyces coelicolor (strain ATCC BAA-471 / A3(2) / M145), this protein is Large ribosomal subunit protein uL4.